Reading from the N-terminus, the 304-residue chain is ATP phosphoribosyltransferase (304 aa).

Belongs to the ATP phosphoribosyltransferase family. Long subfamily. The cofactor is Mg(2+).

It localises to the cytoplasm. It catalyses the reaction 1-(5-phospho-beta-D-ribosyl)-ATP + diphosphate = 5-phospho-alpha-D-ribose 1-diphosphate + ATP. Its pathway is amino-acid biosynthesis; L-histidine biosynthesis; L-histidine from 5-phospho-alpha-D-ribose 1-diphosphate: step 1/9. Feedback inhibited by histidine. Catalyzes the condensation of ATP and 5-phosphoribose 1-diphosphate to form N'-(5'-phosphoribosyl)-ATP (PR-ATP). Has a crucial role in the pathway because the rate of histidine biosynthesis seems to be controlled primarily by regulation of HisG enzymatic activity. The chain is ATP phosphoribosyltransferase from Xanthomonas oryzae pv. oryzae (strain MAFF 311018).